The following is a 397-amino-acid chain: Probable N-succinyldiaminopimelate aminotransferase DapC (397 aa).

Residues 109–110 (GS) and 218–222 (DGMAE) each bind pyridoxal 5'-phosphate. Lysine 232 bears the N6-(pyridoxal phosphate)lysine mark.

Belongs to the class-III pyridoxal-phosphate-dependent aminotransferase family. Homodimer. The cofactor is pyridoxal 5'-phosphate.

The protein localises to the cytoplasm. It catalyses the reaction N-succinyl-(2S,6S)-2,6-diaminopimelate + 2-oxoglutarate = (S)-2-succinylamino-6-oxoheptanedioate + L-glutamate. Its pathway is amino-acid biosynthesis; L-lysine biosynthesis via DAP pathway; LL-2,6-diaminopimelate from (S)-tetrahydrodipicolinate (succinylase route): step 2/3. In terms of biological role, involved in the lysine biosynthetic pathways. It catalyzes the transfer of an amino group from L-glutamate to N-succinyl-2-l-amino-6-oxoheptanedioate (N-succinyl-2-l-amino-6-ketopimelate) in a PLP-dependent reaction, yielding as products N-succinyl-l-2,6-diaminoheptanedioate (N-succinyl-diaminopimelate) and 2-oxoglutarate. This chain is Probable N-succinyldiaminopimelate aminotransferase DapC (dapC), found in Mycobacterium tuberculosis (strain CDC 1551 / Oshkosh).